The following is a 337-amino-acid chain: Tryptophan--tRNA ligase 2 (337 aa).

Residues Gln13 to Thr15 and Gly22 to Asn23 each bind ATP. The short motif at Pro14–Asn23 is the 'HIGH' region element. Asp139 provides a ligand contact to L-tryptophan. ATP-binding positions include Gly151–Asp153, Ile190, and Lys199–Ser203. The short motif at Lys199–Ser203 is the 'KMSKS' region element.

The protein belongs to the class-I aminoacyl-tRNA synthetase family. As to quaternary structure, homodimer.

Its subcellular location is the cytoplasm. It carries out the reaction tRNA(Trp) + L-tryptophan + ATP = L-tryptophyl-tRNA(Trp) + AMP + diphosphate + H(+). Catalyzes the attachment of tryptophan to tRNA(Trp). The protein is Tryptophan--tRNA ligase 2 of Streptomyces avermitilis (strain ATCC 31267 / DSM 46492 / JCM 5070 / NBRC 14893 / NCIMB 12804 / NRRL 8165 / MA-4680).